The sequence spans 288 residues: Elongation factor Ts (288 aa).

The interval 82–85 is involved in Mg(2+) ion dislocation from EF-Tu; sequence TDFV.

It belongs to the EF-Ts family.

The protein resides in the cytoplasm. Associates with the EF-Tu.GDP complex and induces the exchange of GDP to GTP. It remains bound to the aminoacyl-tRNA.EF-Tu.GTP complex up to the GTP hydrolysis stage on the ribosome. In Chlorobium phaeobacteroides (strain BS1), this protein is Elongation factor Ts.